An 86-amino-acid polypeptide reads, in one-letter code: MKTINTVVAAMALSTLSFGVFAAEPVTASQAQNMNKIGVVSADGASTLDALEAKLAEKAAAAGASGYSITSATNNNKLSGTAVIYK.

The signal sequence occupies residues 1–22 (MKTINTVVAAMALSTLSFGVFA).

The protein belongs to the BhsA/McbA family.

The protein resides in the periplasm. This is an uncharacterized protein from Escherichia coli O6:H1 (strain CFT073 / ATCC 700928 / UPEC).